We begin with the raw amino-acid sequence, 331 residues long: Glyceraldehyde-3-phosphate dehydrogenase 3 (331 aa).

NAD(+) contacts are provided by residues 11 to 12, D33, and E77; that span reads RI. At S148 the chain carries Phosphoserine. D-glyceraldehyde 3-phosphate is bound at residue 148–150; sequence SCT. C149 (nucleophile) is an active-site residue. Phosphoserine is present on S177. Residue T179 coordinates D-glyceraldehyde 3-phosphate. Phosphoserine is present on S200. Residues 208–209 and R231 each bind D-glyceraldehyde 3-phosphate; that span reads TG. N313 is an NAD(+) binding site.

The protein belongs to the glyceraldehyde-3-phosphate dehydrogenase family. Homotetramer.

It localises to the cytoplasm. It catalyses the reaction D-glyceraldehyde 3-phosphate + phosphate + NAD(+) = (2R)-3-phospho-glyceroyl phosphate + NADH + H(+). It participates in carbohydrate degradation; glycolysis; pyruvate from D-glyceraldehyde 3-phosphate: step 1/5. The chain is Glyceraldehyde-3-phosphate dehydrogenase 3 from Kluyveromyces marxianus (Yeast).